Consider the following 115-residue polypeptide: NADH-ubiquinone oxidoreductase chain 3 (115 aa).

A run of 3 helical transmembrane segments spans residues 4–24 (FMAL…AFWL), 55–75 (FFLV…LLPL), and 87–107 (MMLT…YEWV).

This sequence belongs to the complex I subunit 3 family. In terms of assembly, core subunit of respiratory chain NADH dehydrogenase (Complex I) which is composed of 45 different subunits. Interacts with TMEM186. Interacts with TMEM242.

It localises to the mitochondrion inner membrane. It catalyses the reaction a ubiquinone + NADH + 5 H(+)(in) = a ubiquinol + NAD(+) + 4 H(+)(out). Functionally, core subunit of the mitochondrial membrane respiratory chain NADH dehydrogenase (Complex I) which catalyzes electron transfer from NADH through the respiratory chain, using ubiquinone as an electron acceptor. Essential for the catalytic activity of complex I. The protein is NADH-ubiquinone oxidoreductase chain 3 of Osgoodomys banderanus (Michoacan deer mouse).